The sequence spans 276 residues: Putative ankyrin repeat protein R838 (276 aa).

ANK repeat units follow at residues 134–163, 164–193, 195–223, and 225–253; these read DGDNALLMAAENGYYEVVTYLINKGCDPRS, DYDYALRSAAEKGHIDVVKLLLEKGADISS, NHWPLSYAALEGKFEMVKFLISRGADVRA, and NYNPIKYALDGGHREIADYMLDLCPEIGS. Positions 254 to 276 are disordered; sequence VSDDDTYDSDSSDYSEDDSESIN. Positions 255-276 are enriched in acidic residues; it reads SDDDTYDSDSSDYSEDDSESIN.

This Acanthamoeba polyphaga (Amoeba) protein is Putative ankyrin repeat protein R838.